Consider the following 238-residue polypeptide: dITP/XTP pyrophosphatase (238 aa).

7–12 (SANQHK) provides a ligand contact to substrate. Residue D89 is the Proton acceptor of the active site. Position 89 (D89) interacts with Mg(2+). Residues S90, 191–194 (FGYD), K217, and 222–223 (HR) each bind substrate.

Belongs to the HAM1 NTPase family. As to quaternary structure, homodimer. Mg(2+) serves as cofactor.

It carries out the reaction XTP + H2O = XMP + diphosphate + H(+). The enzyme catalyses dITP + H2O = dIMP + diphosphate + H(+). The catalysed reaction is ITP + H2O = IMP + diphosphate + H(+). In terms of biological role, pyrophosphatase that catalyzes the hydrolysis of nucleoside triphosphates to their monophosphate derivatives, with a high preference for the non-canonical purine nucleotides XTP (xanthosine triphosphate), dITP (deoxyinosine triphosphate) and ITP. Seems to function as a house-cleaning enzyme that removes non-canonical purine nucleotides from the nucleotide pool, thus preventing their incorporation into DNA/RNA and avoiding chromosomal lesions. The chain is dITP/XTP pyrophosphatase from Helicobacter hepaticus (strain ATCC 51449 / 3B1).